The following is a 141-amino-acid chain: MAKKVVGMIKLQLPAGKASPAPPVGPALGQHGVNIMGFCKEFNAKTANQAGLIIPVVITVYQDRSFSFILKTPPAAVLLKKAAGIESGSGVPNKTKVAKVTKDQIREIAETKMPDLNAGSIETAMSMIAGTARSMGITVEE.

It belongs to the universal ribosomal protein uL11 family. In terms of assembly, part of the ribosomal stalk of the 50S ribosomal subunit. Interacts with L10 and the large rRNA to form the base of the stalk. L10 forms an elongated spine to which L12 dimers bind in a sequential fashion forming a multimeric L10(L12)X complex. One or more lysine residues are methylated.

Its function is as follows. Forms part of the ribosomal stalk which helps the ribosome interact with GTP-bound translation factors. This Clostridium botulinum (strain Kyoto / Type A2) protein is Large ribosomal subunit protein uL11.